The primary structure comprises 629 residues: tRNA uridine 5-carboxymethylaminomethyl modification enzyme MnmG (629 aa).

FAD is bound by residues 13–18, valine 125, and serine 180; that span reads GGGHAG. Residue 273–287 participates in NAD(+) binding; sequence GPRYCPSIEDKVMRF. Glutamine 370 lines the FAD pocket.

This sequence belongs to the MnmG family. Homodimer. Heterotetramer of two MnmE and two MnmG subunits. Requires FAD as cofactor.

The protein localises to the cytoplasm. NAD-binding protein involved in the addition of a carboxymethylaminomethyl (cmnm) group at the wobble position (U34) of certain tRNAs, forming tRNA-cmnm(5)s(2)U34. The protein is tRNA uridine 5-carboxymethylaminomethyl modification enzyme MnmG of Escherichia coli O45:K1 (strain S88 / ExPEC).